Consider the following 116-residue polypeptide: NADH-ubiquinone oxidoreductase chain 3 (116 aa).

The next 3 helical transmembrane spans lie at Leu3–Phe23, Phe56–Leu76, and Leu87–Trp107.

It belongs to the complex I subunit 3 family.

It is found in the mitochondrion membrane. It catalyses the reaction a ubiquinone + NADH + 5 H(+)(in) = a ubiquinol + NAD(+) + 4 H(+)(out). Functionally, core subunit of the mitochondrial membrane respiratory chain NADH dehydrogenase (Complex I) that is believed to belong to the minimal assembly required for catalysis. Complex I functions in the transfer of electrons from NADH to the respiratory chain. The immediate electron acceptor for the enzyme is believed to be ubiquinone. The polypeptide is NADH-ubiquinone oxidoreductase chain 3 (MT-ND3) (Oncorhynchus mykiss (Rainbow trout)).